We begin with the raw amino-acid sequence, 210 residues long: MHRRITGKLVIATHNPGKLAEMRELLAPYGIEAISAGELGLAEPDETGDSFQANARIKAEAAAKAAQLPAFADDSGLAVDALDGAPGIYSARWAGDAKDFAGAMARIERLLQERGATAPERRTAHFVSALCVAWPDGHIEEVEARADGTLVWPPRGTAGFGYDPVFLPEGHSRTFGEMTSIEKHGLPPLGLGLSHRAKAFVKLAEICLAG.

13–18 lines the substrate pocket; that stretch reads THNPGK. 2 residues coordinate Mg(2+): D45 and D74. D74 serves as the catalytic Proton acceptor. Substrate is bound by residues S75, 160–163, K183, and 195–196; these read FGYD and HR.

The protein belongs to the HAM1 NTPase family. Homodimer. Mg(2+) is required as a cofactor.

The catalysed reaction is XTP + H2O = XMP + diphosphate + H(+). It catalyses the reaction dITP + H2O = dIMP + diphosphate + H(+). It carries out the reaction ITP + H2O = IMP + diphosphate + H(+). Pyrophosphatase that catalyzes the hydrolysis of nucleoside triphosphates to their monophosphate derivatives, with a high preference for the non-canonical purine nucleotides XTP (xanthosine triphosphate), dITP (deoxyinosine triphosphate) and ITP. Seems to function as a house-cleaning enzyme that removes non-canonical purine nucleotides from the nucleotide pool, thus preventing their incorporation into DNA/RNA and avoiding chromosomal lesions. The polypeptide is dITP/XTP pyrophosphatase (Rhodopseudomonas palustris (strain ATCC BAA-98 / CGA009)).